Here is a 2248-residue protein sequence, read N- to C-terminus: Zinc finger protein lin-13 (2248 aa).

The segment at 1 to 189 is disordered; that stretch reads MDEFELFQQL…TYASQYSRPP (189 aa). The span at 29-38 shows a compositional bias: polar residues; it reads QQANNNQSAP. Basic and acidic residues predominate over residues 54–92; that stretch reads KQREEEEAQRLADFMQKDMKEPAVKRKRGSEEYKKDPLE. Residues 145–155 are compositionally biased toward acidic residues; the sequence is ELDENYMEENE. The Required for interaction with hpl-2 isoform a signature appears at 440-444; that stretch reads PLVPV. Residues 503 to 525 form a C2H2-type 1 zinc finger; the sequence is HTCIKCGKTFGTEFMLKHHAQSH. The tract at residues 603–665 is disordered; it reads KTKKENRNIT…FTSSKQKKKR (63 aa). The segment covering 605–620 has biased composition (basic and acidic residues); that stretch reads KKENRNITDSNEKEFS. C2H2-type zinc fingers lie at residues 812 to 837, 959 to 982, 1140 to 1162, 1556 to 1578, 1601 to 1623, and 1657 to 1680; these read VRCI…SDVH, YSCS…TRFH, LMCY…MDDH, FKCQ…MRDH, WLCR…MAIH, and YSCG…SVAH. Positions 1859-1877 are enriched in polar residues; the sequence is PRSSLQTNGSSMGSVTTNG. Residues 1859–1900 form a disordered region; that stretch reads PRSSLQTNGSSMGSVTTNGGRVVRPSPPNSMNVTLRRAPPQQ.

In terms of assembly, interacts (via PLVPV motif) with chromobox protein homolog hpl-2 (via chromo (shadow subtype) domain); the interaction is direct and influences localization of hpl-2 to nuclear foci. In terms of tissue distribution, in the L3 stage, expressed in syncytial hypodermal cell 7, body wall muscles, intestinal cells, distal tip cells and many neurons.

The protein localises to the nucleus. Functionally, involved in repression of vulval fate, possibly by a tumor suppressor protein Rb-mediated mechanism. May act in a common pathway with retinoblastoma-like protein homolog lin-35 and hpl-2 to influence the ER stress response in the intestine. Plays a role in recruiting chromobox protein homolog hpl-2 to specific chromatin sites. The sequence is that of Zinc finger protein lin-13 (lin-13) from Caenorhabditis elegans.